A 110-amino-acid polypeptide reads, in one-letter code: Protein ripply3 (110 aa).

The WRPW motif signature appears at 18-21; that stretch reads WRPW. The ripply homology domain stretch occupies residues 50–85; sequence HPVRLFLPRSRMQEYLSRLGSSVLASFPVQATLHFY. Over residues 87–99 the composition is skewed to acidic residues; sequence DEDSSSEEEEDEE. The tract at residues 87–110 is disordered; the sequence is DEDSSSEEEEDEEHANTRCRLWRP.

This sequence belongs to the ripply family.

Its subcellular location is the nucleus. In terms of biological role, probable transcriptional regulator involved in developmental processes. The polypeptide is Protein ripply3 (ripply3) (Danio rerio (Zebrafish)).